Here is a 250-residue protein sequence, read N- to C-terminus: Flavin-dependent thymidylate synthase (250 aa).

Positions 7–233 (LRVQLIAKTD…PAVFADFEIA (227 aa)) constitute a ThyX domain. FAD-binding positions include Ser-71, 95–97 (RHR), and Gln-103. DUMP is bound by residues 92–95 (ELIR), 103–107 (QLSQR), and Arg-172. The ThyX motif motif lies at 95-105 (RHRHFSYSQLS). FAD contacts are provided by residues 188-190 (NYR) and His-194. Arg-199 serves as a coordination point for dUMP. Residue Arg-199 is the Involved in ionization of N3 of dUMP, leading to its activation of the active site.

The protein belongs to the thymidylate synthase ThyX family. As to quaternary structure, homotetramer. The cofactor is FAD.

The catalysed reaction is dUMP + (6R)-5,10-methylene-5,6,7,8-tetrahydrofolate + NADPH + H(+) = dTMP + (6S)-5,6,7,8-tetrahydrofolate + NADP(+). It functions in the pathway pyrimidine metabolism; dTTP biosynthesis. In terms of biological role, catalyzes the reductive methylation of 2'-deoxyuridine-5'-monophosphate (dUMP) to 2'-deoxythymidine-5'-monophosphate (dTMP) while utilizing 5,10-methylenetetrahydrofolate (mTHF) as the methyl donor, and NADPH and FADH(2) as the reductant. The polypeptide is Flavin-dependent thymidylate synthase (Mycobacterium avium (strain 104)).